A 64-amino-acid chain; its full sequence is Large ribosomal subunit protein bL35 (64 aa).

Basic residues predominate over residues 1–15 (MPKQKSHSGASKRFR). Residues 1–22 (MPKQKSHSGASKRFRVTGSGKV) are disordered.

Belongs to the bacterial ribosomal protein bL35 family.

The sequence is that of Large ribosomal subunit protein bL35 from Frankia casuarinae (strain DSM 45818 / CECT 9043 / HFP020203 / CcI3).